A 291-amino-acid chain; its full sequence is Nucleotide-binding protein EUBREC_0697 (291 aa).

An ATP-binding site is contributed by 8–15 (GMSGAGKS). Residue 59 to 62 (DVRN) participates in GTP binding.

It belongs to the RapZ-like family.

Functionally, displays ATPase and GTPase activities. This Agathobacter rectalis (strain ATCC 33656 / DSM 3377 / JCM 17463 / KCTC 5835 / VPI 0990) (Eubacterium rectale) protein is Nucleotide-binding protein EUBREC_0697.